The following is an 853-amino-acid chain: DNA mismatch repair protein MutS (853 aa).

An ATP-binding site is contributed by Gly614–Ser621.

Belongs to the DNA mismatch repair MutS family.

In terms of biological role, this protein is involved in the repair of mismatches in DNA. It is possible that it carries out the mismatch recognition step. This protein has a weak ATPase activity. This chain is DNA mismatch repair protein MutS, found in Escherichia coli (strain 55989 / EAEC).